A 206-amino-acid chain; its full sequence is Cytidylate kinase (206 aa).

9-17 serves as a coordination point for ATP; sequence GPAAAGKGT. A compositionally biased stretch (basic and acidic residues) spans 155–168; sequence LRERDRRDREREAA. Residues 155–174 form a disordered region; the sequence is LRERDRRDREREAAPLRPAP.

The protein belongs to the cytidylate kinase family. Type 1 subfamily.

It is found in the cytoplasm. The catalysed reaction is CMP + ATP = CDP + ADP. It catalyses the reaction dCMP + ATP = dCDP + ADP. The protein is Cytidylate kinase of Cereibacter sphaeroides (strain KD131 / KCTC 12085) (Rhodobacter sphaeroides).